A 542-amino-acid chain; its full sequence is MAKQILFDRDAREKLKKGVDALADAVKVTLGPKGRNVILDKKFGSPAITKDGVSVAKDIELKDAIENMGAQLVKEVASKTADQAGDGTTTATVLTQAIFNAGLKNVAAGANPMDLKRGIDKAVSAIIADLKVQSKKISNSNEIAQVATISANNDHEIGKMIAHAMDKVGKDGVITVEEAKGTETEVKTVEGMQFDRGYLSPYFVTNTDKMEVELDRPYILIYDKKVSSMKELLPILEQVVQSGRPLLIIAEDVDGEALATLVVNKIRGALKIAAVKAPGFGDRRKAMLEDIAILTGGTVISEESGYKLENATLEYLGTAEKINIDKDNTTVVNGSGLKDNIVARVNQIKSQMENTTSDYDREKLQERLAKLSGGVAIMYIGAATEVEMKEKKDRVDDALHATRAAVEEGIVPGGGVALIRAGAALDNVAFHNEDEKTGIQIIRTAIESPLRAIVYNAGLEGSVIVQKVKEGTGDYGYNAREDRYEAMIAAGIIDPTKVTRLALENAASVASLLLTTECVVADEPEEKSAMPPMGGGGMGGMM.

ATP contacts are provided by residues 29–32 (TLGP), K50, 86–90 (DGTTT), G414, and D494.

Belongs to the chaperonin (HSP60) family. In terms of assembly, forms a cylinder of 14 subunits composed of two heptameric rings stacked back-to-back. Interacts with the co-chaperonin GroES.

The protein resides in the cytoplasm. It catalyses the reaction ATP + H2O + a folded polypeptide = ADP + phosphate + an unfolded polypeptide.. Together with its co-chaperonin GroES, plays an essential role in assisting protein folding. The GroEL-GroES system forms a nano-cage that allows encapsulation of the non-native substrate proteins and provides a physical environment optimized to promote and accelerate protein folding. The chain is Chaperonin GroEL from Cytophaga hutchinsonii (strain ATCC 33406 / DSM 1761 / CIP 103989 / NBRC 15051 / NCIMB 9469 / D465).